The primary structure comprises 130 residues: Small ribosomal subunit protein uS11c (130 aa).

Belongs to the universal ribosomal protein uS11 family. As to quaternary structure, part of the 30S ribosomal subunit.

The protein localises to the plastid. The protein resides in the chloroplast. This Marsilea quadrifolia (European water clover) protein is Small ribosomal subunit protein uS11c.